The following is a 346-amino-acid chain: MSLLKDSTVAVITGTSSNLGFNIAVRLLEGLPDNKEITLVVTSRTLPKVKEVISDIKKYIVEKIPTKVNKVEFDYLLVDFTDMVSILSAYYELNKRYKHIDYLFINAAQGVYGGIDWTGAVLEVLQSPIEAVTNPTYKLQKVGVESGDKLGLVFQANVFGPYYFIHRIKHLLKNGGKIVWISSLMSSPKYLSFNDLQLLRSPASYEGSKRLVDLMHFGTYNKLEREYGIKQYLVHPGIFTSFSFFQYLNVFTYYGMLFLFYLARFLGSPYHNISGYIAANAPVAAALGQTKQNCKTASACTRSGKEYLLEEEIDSTGSDDVVSYLDTLTKEWDEKLKDQIVNTRQP.

NADP(+) contacts are provided by Leu-19, Thr-42, and Lys-48. Residues Ser-182 and Tyr-205 each act as proton donor in the active site. 3 residues coordinate NADP(+): Tyr-205, Lys-209, and Ser-241. The Lowers pKa of active site Tyr role is filled by Lys-209. The helical transmembrane segment at 242 to 262 (FSFFQYLNVFTYYGMLFLFYL) threads the bilayer. N-linked (GlcNAc...) asparagine glycosylation occurs at Asn-272.

Belongs to the short-chain dehydrogenases/reductases (SDR) family. ERG27 subfamily. Heterotetramer of ERG25, ERG26, ERG27 and ERG28. ERG28 acts as a scaffold to tether ERG27 and other 4,4-demethylation-related enzymes, forming a demethylation enzyme complex, in the endoplasmic reticulum. Interacts with ERG25 and ERG28. Also interacts with ERG7, but only in lipid particles.

The protein resides in the endoplasmic reticulum membrane. It localises to the lipid droplet. The enzyme catalyses 3-dehydro-4alpha-methylzymosterol + NADPH + H(+) = 4alpha-methylzymosterol + NADP(+). Its pathway is steroid biosynthesis; zymosterol biosynthesis; zymosterol from lanosterol: step 5/6. Its function is as follows. 3-keto-steroid reductase; part of the third module of ergosterol biosynthesis pathway that includes the late steps of the pathway. ERG27 is a catalytic component of the C-4 demethylation complex that catalyzes the reduction of the keto group on the C-3. The third module or late pathway involves the ergosterol synthesis itself through consecutive reactions that mainly occur in the endoplasmic reticulum (ER) membrane. Firstly, the squalene synthase ERG9 catalyzes the condensation of 2 farnesyl pyrophosphate moieties to form squalene, which is the precursor of all steroids. Squalene synthase is crucial for balancing the incorporation of farnesyl diphosphate (FPP) into sterol and nonsterol isoprene synthesis. Secondly, the squalene epoxidase ERG1 catalyzes the stereospecific oxidation of squalene to (S)-2,3-epoxysqualene, which is considered to be a rate-limiting enzyme in steroid biosynthesis. Then, the lanosterol synthase ERG7 catalyzes the cyclization of (S)-2,3 oxidosqualene to lanosterol, a reaction that forms the sterol core. In the next steps, lanosterol is transformed to zymosterol through a complex process involving various demethylation, reduction and desaturation reactions. The lanosterol 14-alpha-demethylase ERG11 (also known as CYP51) catalyzes C14-demethylation of lanosterol to produce 4,4'-dimethyl cholesta-8,14,24-triene-3-beta-ol, which is critical for ergosterol biosynthesis. The C-14 reductase ERG24 reduces the C14=C15 double bond of 4,4-dimethyl-cholesta-8,14,24-trienol to produce 4,4-dimethyl-cholesta-8,24-dienol. 4,4-dimethyl-cholesta-8,24-dienol is substrate of the C-4 demethylation complex ERG25-ERG26-ERG27 in which ERG25 catalyzes the three-step monooxygenation required for the demethylation of 4,4-dimethyl and 4alpha-methylsterols, ERG26 catalyzes the oxidative decarboxylation that results in a reduction of the 3-beta-hydroxy group at the C-3 carbon to an oxo group, and ERG27 is responsible for the reduction of the keto group on the C-3. ERG28 has a role as a scaffold to help anchor ERG25, ERG26 and ERG27 to the endoplasmic reticulum and ERG29 regulates the activity of the iron-containing C4-methylsterol oxidase ERG25. Then, the sterol 24-C-methyltransferase ERG6 catalyzes the methyl transfer from S-adenosyl-methionine to the C-24 of zymosterol to form fecosterol. The C-8 sterol isomerase ERG2 catalyzes the reaction which results in unsaturation at C-7 in the B ring of sterols and thus converts fecosterol to episterol. The sterol-C5-desaturase ERG3 then catalyzes the introduction of a C-5 double bond in the B ring to produce 5-dehydroepisterol. The C-22 sterol desaturase ERG5 further converts 5-dehydroepisterol into ergosta-5,7,22,24(28)-tetraen-3beta-ol by forming the C-22(23) double bond in the sterol side chain. Finally, ergosta-5,7,22,24(28)-tetraen-3beta-ol is substrate of the C-24(28) sterol reductase ERG4 to produce ergosterol. Facilitates the association of ERG7 with lipid particles preventing its digestion in the endoplasmic reticulum and the lipid particles. The chain is 3-keto-steroid reductase ERG27 from Candida albicans (Yeast).